The following is a 621-amino-acid chain: MASIPALTDELESVSSELHAVDIQIQELTERQHELLQRKSVLTKRIKQCLEDSAAEASGDCDTSPAAWSKEDFPWSGKVKHVLRDVFKLQKFRPLQLETVNATMARKDIFLVMPTGGGKSLCYQLPALCSDGFTLVICPLISLMEDQLMVLQQLGISATMLNSSSSKEHVKCVHTEMMNKNSHLKLIYVTPEKIAKSKMFMSRLEKAYEAGRLTGVAVDEVHCCSQWGHDFRPDYKALGILKRQFPNISLIGLTATATNHVLKDAQKILCVEKCLTFTASFNRPNLYYEVRQKPSSAEDFIENIANLINGRYKGKSGIIYCFSQKDSEQVTISLQKLGVRAGTYHANMEPEDRTKVHTQWSANELQVVVATVAFGMGIDKPDVRFVIHHSMSKSMENYYQESGRAGRDDWRADCILYYGFGDIFRISSMVVMENVGQQKLYEMVSYCQNISKCRRALIAQHFDEVWNADACNKMCDNCCKDDSFEKKNITEHCQALIKILKQAEGLNEKLTPLKLIDAWMGKGAAKFRVAGVAVPALPREDLEKIIVHALLQQYLKEDYSFTAYATISYLKVGPRASLLSNEGHAVTMQVKRSTQSSVRAASPEACEVDSKGKEKSSAVLC.

The region spanning 100–275 (VNATMARKDI…QKILCVEKCL (176 aa)) is the Helicase ATP-binding domain. 113–120 (MPTGGGKS) contacts ATP. The DEVH box signature appears at 219–222 (DEVH). The region spanning 296-451 (SAEDFIENIA…EMVSYCQNIS (156 aa)) is the Helicase C-terminal domain. Residues Cys-453, Cys-471, Cys-475, and Cys-478 each coordinate Zn(2+). 2 positions are modified to N6-acetyllysine: Lys-514 and Lys-522. Residues Ser-597 and Ser-602 each carry the phosphoserine modification.

It belongs to the helicase family. RecQ subfamily. In terms of assembly, may form homodimers or higher order oligomers. Interacts with EXO1. Interacts with MLH1. Interacts with PARP1. The cofactor is Mg(2+). It depends on Mn(2+) as a cofactor. Requires Zn(2+) as cofactor.

It localises to the nucleus. The enzyme catalyses Couples ATP hydrolysis with the unwinding of duplex DNA by translocating in the 3'-5' direction.. It catalyses the reaction ATP + H2O = ADP + phosphate + H(+). The catalysed reaction is dATP + H2O = dADP + phosphate + H(+). Functionally, DNA helicase that plays a role in DNA damage repair and genome stability. Exhibits a magnesium- and ATP-dependent DNA-helicase activity that unwinds single- and double-stranded DNA in a 3'-5' direction. Plays a role in restoring regressed replication forks. Required to restart stalled replication forks induced by abortive topoisomerase 1 and 2 lesions. May play a role in the repair of DNA that is damaged by ultraviolet light or other mutagens. This Rattus norvegicus (Rat) protein is ATP-dependent DNA helicase Q1 (Recql).